We begin with the raw amino-acid sequence, 128 residues long: Aspartate 1-decarboxylase (128 aa).

The active-site Schiff-base intermediate with substrate; via pyruvic acid is the Ser-25. A Pyruvic acid (Ser) modification is found at Ser-25. Residue Thr-57 coordinates substrate. The active-site Proton donor is Tyr-58. Residue Gly-73–Ala-75 participates in substrate binding.

Belongs to the PanD family. As to quaternary structure, heterooctamer of four alpha and four beta subunits. The cofactor is pyruvate. Is synthesized initially as an inactive proenzyme, which is activated by self-cleavage at a specific serine bond to produce a beta-subunit with a hydroxyl group at its C-terminus and an alpha-subunit with a pyruvoyl group at its N-terminus.

It localises to the cytoplasm. It catalyses the reaction L-aspartate + H(+) = beta-alanine + CO2. The protein operates within cofactor biosynthesis; (R)-pantothenate biosynthesis; beta-alanine from L-aspartate: step 1/1. Its function is as follows. Catalyzes the pyruvoyl-dependent decarboxylation of aspartate to produce beta-alanine. This chain is Aspartate 1-decarboxylase, found in Caldicellulosiruptor saccharolyticus (strain ATCC 43494 / DSM 8903 / Tp8T 6331).